A 304-amino-acid chain; its full sequence is Putative S-adenosyl-L-methionine-dependent methyltransferase MSMEG_1481/MSMEI_1445 (304 aa).

S-adenosyl-L-methionine is bound by residues Asp127 and 156–157 (DL).

Belongs to the UPF0677 family.

Functionally, exhibits S-adenosyl-L-methionine-dependent methyltransferase activity. This Mycolicibacterium smegmatis (strain ATCC 700084 / mc(2)155) (Mycobacterium smegmatis) protein is Putative S-adenosyl-L-methionine-dependent methyltransferase MSMEG_1481/MSMEI_1445.